The sequence spans 175 residues: Large ribosomal subunit protein uL10 (175 aa).

It belongs to the universal ribosomal protein uL10 family. As to quaternary structure, part of the ribosomal stalk of the 50S ribosomal subunit. The N-terminus interacts with L11 and the large rRNA to form the base of the stalk. The C-terminus forms an elongated spine to which L12 dimers bind in a sequential fashion forming a multimeric L10(L12)X complex.

Functionally, forms part of the ribosomal stalk, playing a central role in the interaction of the ribosome with GTP-bound translation factors. This is Large ribosomal subunit protein uL10 from Alkalilimnicola ehrlichii (strain ATCC BAA-1101 / DSM 17681 / MLHE-1).